The chain runs to 77 residues: Tachyplesin-2 (77 aa).

A signal peptide spans 1–23 (MKKLVIALCLMMVLAVMVEEAEA). 2 disulfides stabilise this stretch: Cys26/Cys39 and Cys30/Cys35. The residue at position 40 (Arg40) is an Arginine amide. A propeptide spanning residues 41 to 77 (GKRNEVRQYRDRGYDVRAIPDETFFTRQDEDEDDDEE) is cleaved from the precursor.

It belongs to the tachyplesin/polyphemusin family. As to expression, hemocytes.

It localises to the secreted. Its function is as follows. Significantly inhibits the growth of Gram-negative and Gram-positive bacteria. The chain is Tachyplesin-2 from Tachypleus tridentatus (Japanese horseshoe crab).